The sequence spans 501 residues: ATP synthase subunit alpha (501 aa).

169-176 is an ATP binding site; the sequence is GDRQTGKT.

The protein belongs to the ATPase alpha/beta chains family. F-type ATPases have 2 components, CF(1) - the catalytic core - and CF(0) - the membrane proton channel. CF(1) has five subunits: alpha(3), beta(3), gamma(1), delta(1), epsilon(1). CF(0) has three main subunits: a(1), b(2) and c(9-12). The alpha and beta chains form an alternating ring which encloses part of the gamma chain. CF(1) is attached to CF(0) by a central stalk formed by the gamma and epsilon chains, while a peripheral stalk is formed by the delta and b chains.

It is found in the cell membrane. It carries out the reaction ATP + H2O + 4 H(+)(in) = ADP + phosphate + 5 H(+)(out). Functionally, produces ATP from ADP in the presence of a proton gradient across the membrane. The alpha chain is a regulatory subunit. In Streptococcus pneumoniae serotype 2 (strain D39 / NCTC 7466), this protein is ATP synthase subunit alpha.